Reading from the N-terminus, the 519-residue chain is MAAEREPPPLGDVKPTDFEELEDGEDLFTSTVSTLESSPSSPEPASLPAEDISANSNGSKPVEVVLDDDREDLFAEATEEVSLDSPERELILSSEPSPAVTPVTPTTLIAPRIESKSISAPVIFDRSRDEIEEEANGDIFDIEIGVSDPEKVGDGMNAYMAYRVTTKTSLSMFSKSEFSVKRRFSDFLGLHSKLASKYLHVGYIVPPAPEKSIVGMTKVKVGKEDSSSTEFVEKRRAALERYLQRTVKHPTLLQDPDLRQFLESSELPRAVNTQALSGAGILRMVNKAADAVNKMTIKMNESDAWFEEKQQQFENLDQQLRKLHASVEALVCHRKELSANTAAFAKSAAMLGNSEDHTALSRALSQLAEVEEKIDQLHQEQAFADFYMFSELLSDYIRLIAAVKGVFDHRMKCWQKWEDAQITLLKKRETEAKMMVANKPDKIQQAKNEIREWEAKVQQGERDFEQISKTIRKEVGRFEKERVKDFKAVIIKYLESLVQTQQQLIKYWEAFLPEAKAIA.

The span at 30 to 50 shows a compositional bias: low complexity; that stretch reads STVSTLESSPSSPEPASLPAE. The segment at 30-62 is disordered; sequence STVSTLESSPSSPEPASLPAEDISANSNGSKPV. Ser97 carries the post-translational modification Phosphoserine. Thr101 and Thr104 each carry phosphothreonine. Residues Ser117 and Ser119 each carry the phosphoserine modification. One can recognise a PX domain in the interval 140 to 269; sequence FDIEIGVSDP…QFLESSELPR (130 aa). Positions 183, 185, 211, and 235 each coordinate a 1,2-diacyl-sn-glycero-3-phospho-(1D-myo-inositol-3-phosphate). At Ser185 the chain carries Phosphoserine. An interaction with RhoG region spans residues 260 to 519; that stretch reads QFLESSELPR…AFLPEAKAIA (260 aa). The residue at position 277 (Ser277) is a Phosphoserine. Residues 278–295 are membrane-binding amphipathic helix; that stretch reads GAGILRMVNKAADAVNKM. The BAR domain occupies 299-519; the sequence is MNESDAWFEE…AFLPEAKAIA (221 aa). N6-acetyllysine is present on Lys469.

It belongs to the sorting nexin family. As to quaternary structure, predominantly forms heterodimers with BAR domain-containing sorting nexins SNX5, SNX6 and SNX32; can self-associate to form homodimers. The heterodimers are proposed to self-assemble into helical arrays on the membrane to stabilize and expand local membrane curvature underlying endosomal tubule formation. Thought to be a component of the originally described retromer complex (also called SNX-BAR retromer) which is a pentamer containing the heterotrimeric retromer cargo-selective complex (CSC), also described as vacuolar protein sorting subcomplex (VPS), and a heterodimeric membrane-deforming subcomplex formed between SNX1 or SNX2 and SNX5 or SNX6 (also called SNX-BAR subcomplex); the respective CSC and SNX-BAR subcomplexes associate with low affinity. Interacts with SNX5, SNX6, SNX32, VPS26A, VPS29, VPS35, FNBP1, KALRN, RHOG (GDP-bound form).

It localises to the early endosome membrane. The protein resides in the cell projection. Its subcellular location is the lamellipodium. Its function is as follows. Involved in several stages of intracellular trafficking. Interacts with membranes containing phosphatidylinositol 3-phosphate (PtdIns(3P)) or phosphatidylinositol 3,5-bisphosphate (PtdIns(3,5)P2). Acts in part as component of the retromer membrane-deforming SNX-BAR subcomplex. The SNX-BAR retromer mediates retrograde transport of cargo proteins from endosomes to the trans-Golgi network (TGN) and is involved in endosome-to-plasma membrane transport for cargo protein recycling. The SNX-BAR subcomplex functions to deform the donor membrane into a tubular profile called endosome-to-TGN transport carrier (ETC). Can sense membrane curvature and has in vitro vesicle-to-membrane remodeling activity. Required for retrograde endosome-to-TGN transport of TGN38. Promotes KALRN- and RHOG-dependent but retromer-independent membrane remodeling such as lamellipodium formation; the function is dependent on GEF activity of KALRN. The protein is Sorting nexin-2 (Snx2) of Mus musculus (Mouse).